Consider the following 197-residue polypeptide: Nucleoid occlusion factor SlmA (197 aa).

The HTH tetR-type domain occupies 7 to 67; that stretch reads INRREHILQC…GLIEFIEESL (61 aa). Positions 30-49 form a DNA-binding region, H-T-H motif; the sequence is TTAKLASEVGVSEAALYRHF. Residues 110–130 adopt a coiled-coil conformation; the sequence is ALLGENERLRSRISSLFAKIE.

The protein belongs to the nucleoid occlusion factor SlmA family. In terms of assembly, homodimer. Interacts with FtsZ.

The protein resides in the cytoplasm. It localises to the nucleoid. In terms of biological role, required for nucleoid occlusion (NO) phenomenon, which prevents Z-ring formation and cell division over the nucleoid. Acts as a DNA-associated cell division inhibitor that binds simultaneously chromosomal DNA and FtsZ, and disrupts the assembly of FtsZ polymers. SlmA-DNA-binding sequences (SBS) are dispersed on non-Ter regions of the chromosome, preventing FtsZ polymerization at these regions. The protein is Nucleoid occlusion factor SlmA of Shewanella sp. (strain W3-18-1).